A 435-amino-acid chain; its full sequence is Xylose isomerase (435 aa).

Active-site residues include His-99 and Asp-102. Mg(2+) contacts are provided by Glu-230, Glu-266, His-269, Asp-294, Asp-305, Asp-307, and Asp-337.

It belongs to the xylose isomerase family. Homotetramer. Requires Mg(2+) as cofactor.

It localises to the cytoplasm. It catalyses the reaction alpha-D-xylose = alpha-D-xylulofuranose. In Tetragenococcus halophilus (Pediococcus halophilus), this protein is Xylose isomerase (xylA).